A 175-amino-acid chain; its full sequence is NADH-quinone oxidoreductase subunit I 2 (175 aa).

4Fe-4S ferredoxin-type domains lie at 50–82 and 98–127; these read HVLQRDENGLEKCVACFLCAAACPSNCIYIEAA and KVYNIDYNRCIFCGYCVEACPTDAITHGHG. Residues Cys62, Cys65, Cys68, Cys72, Cys107, Cys110, Cys113, and Cys117 each contribute to the [4Fe-4S] cluster site.

Belongs to the complex I 23 kDa subunit family. In terms of assembly, NDH-1 is composed of 14 different subunits. Subunits NuoA, H, J, K, L, M, N constitute the membrane sector of the complex. Requires [4Fe-4S] cluster as cofactor.

It is found in the cell inner membrane. It catalyses the reaction a quinone + NADH + 5 H(+)(in) = a quinol + NAD(+) + 4 H(+)(out). NDH-1 shuttles electrons from NADH, via FMN and iron-sulfur (Fe-S) centers, to quinones in the respiratory chain. The immediate electron acceptor for the enzyme in this species is believed to be ubiquinone. Couples the redox reaction to proton translocation (for every two electrons transferred, four hydrogen ions are translocated across the cytoplasmic membrane), and thus conserves the redox energy in a proton gradient. The protein is NADH-quinone oxidoreductase subunit I 2 of Koribacter versatilis (strain Ellin345).